The primary structure comprises 514 residues: Ankyrin repeat domain-containing protein 34B (514 aa).

ANK repeat units lie at residues 9–38, 42–79, 83–113, and 117–146; these read SEGN…YINE, RGET…DPNI, SGKT…DLSL, and SSYS…AKGK. Residues 220–249 are disordered; the sequence is NDDTWDPGSPVRKPALAPKGPKLPHAPPWV. The residue at position 263 (Ser263) is a Phosphoserine. A Phosphothreonine modification is found at Thr272. Phosphoserine is present on Ser296.

Belongs to the ANKRD34 family. Phosphorylated.

Its subcellular location is the cytoplasm. The protein resides in the nucleus. The sequence is that of Ankyrin repeat domain-containing protein 34B (ANKRD34B) from Homo sapiens (Human).